The following is a 704-amino-acid chain: Protein NPG1 (704 aa).

8 TPR repeats span residues asparagine 24 to phenylalanine 57, glutamate 58 to isoleucine 90, serine 177 to leucine 210, isoleucine 309 to proline 342, proline 430 to serine 463, phenylalanine 555 to serine 588, alanine 589 to serine 622, and arginine 662 to aspartate 695.

As to quaternary structure, interacts with calmodulin in a calcium-dependent manner. Expressed only in pollen and in pollen tubes.

Calmodulin-binding protein essential for pollen germination, but not necessary for microsporogenesis or gametogenesis. This chain is Protein NPG1, found in Arabidopsis thaliana (Mouse-ear cress).